Consider the following 416-residue polypeptide: MSELIEKAKQAQQASKQLAILTTEEKNRALKQIADQLLVERTYLIEENQKDIEAGQRAGISQTLLDRLLLTDERVQAMAEGVEQVIALDDPIGDQIDEFTRPNGLNIRQVRVPLGVIGMIYEARPNVTVDASVLCLKSGNAVLLRGSSSALHSNKALVSVIHRGLEAANVIPKDAVQLLEDTSRETAKEMFKLNDYLDVLIPRGGANLIQSVVKEASVPVLETGVGNCHVYIDESADPEMAVAIAVNAKTQRPSVCNAAETILVHSAWAKEHVSKLIEELRIKEVQIAGDEQIKAVAPFVKPADESDWGTEYLDLQVAMKIVNSVDEAIAHIDRYGSKHSEAIVSETDANVRKFLTNVDATTVYHNASTRFTDGFEFGFGAEIGISTQKLHARGPMGLRALTSSKYVVHGTGQIKK.

The protein belongs to the gamma-glutamyl phosphate reductase family.

It is found in the cytoplasm. It carries out the reaction L-glutamate 5-semialdehyde + phosphate + NADP(+) = L-glutamyl 5-phosphate + NADPH + H(+). It participates in amino-acid biosynthesis; L-proline biosynthesis; L-glutamate 5-semialdehyde from L-glutamate: step 2/2. Catalyzes the NADPH-dependent reduction of L-glutamate 5-phosphate into L-glutamate 5-semialdehyde and phosphate. The product spontaneously undergoes cyclization to form 1-pyrroline-5-carboxylate. The sequence is that of Gamma-glutamyl phosphate reductase from Halalkalibacterium halodurans (strain ATCC BAA-125 / DSM 18197 / FERM 7344 / JCM 9153 / C-125) (Bacillus halodurans).